The sequence spans 682 residues: MSRKQLALFEPTLVVQALKEAVKKLNPQAQWRNPVMFIVWIGSLLTTCISIAMASGAMPGNALFSAAISGWLWVTVLFANFAEALAEGRSKAQANSLKGVKKTAFARKLREPKYGAAADKVPADQLRKGDIVLVEAGDIIPCDGEVIEGGASVDESAITGESAPVIRESGGDFASVTGGTRILSDWLVIECSVNPGETFLDRMIAMVEGAQRRKTPNEIALTILLIALTIVFLLATATLWPFSAWGGNAVSVTVLVALLVCLIPTTIGGLLSAIGVAGMSRMLGTNVIATSGRAVEAAGDVDVLLLDKTGTITLGNRQASEFIPAQGVEEKTLADAAQLASLADETPEGRSIVILAKQRFNLRERDVQSLHATFVPFTAQSRMSGINIDNRMIRKGSVDAIRRHIEANGGHFPADVDQKVDQVARQGATPLVVVEGSRVLGVIALKDIVKGGIKERFAQLRQMGIKTVMITGDNRLTAAAIAAEAGVDDFLAEATPEAKLALIRQYQAEGRLVAMTGDGTNDAPALAQADVAVAMNSGTQAAKEAGNMVDLDSNPTKLIEVVHIGKQMLMTRGSLTTFSIANDVAKYFAIIPAAFAATYPQLNALNIMRLHSPDSAILSAVIFNALIIVFLIPLALKGVSYKPLTASAMLRRNLWIYGLGGLLVPFIGIKVIDLLLTVCGLV.

A run of 4 helical transmembrane segments spans residues 34 to 54 (PVMFIVWIGSLLTTCISIAMA), 62 to 82 (ALFSAAISGWLWVTVLFANFA), 219 to 239 (IALTILLIALTIVFLLATATL), and 254 to 274 (VLVALLVCLIPTTIGGLLSAI). D307 (4-aspartylphosphate intermediate) is an active-site residue. ATP is bound by residues D344, E348, 377 to 384 (FTAQSRMS), and K395. D518 and D522 together coordinate Mg(2+). Transmembrane regions (helical) follow at residues 588-608 (FAIIPAAFAATYPQLNALNIM), 616-636 (AILSAVIFNALIIVFLIPLAL), and 656-676 (IYGLGGLLVPFIGIKVIDLLL).

It belongs to the cation transport ATPase (P-type) (TC 3.A.3) family. Type IA subfamily. As to quaternary structure, the system is composed of three essential subunits: KdpA, KdpB and KdpC.

The protein resides in the cell inner membrane. It carries out the reaction K(+)(out) + ATP + H2O = K(+)(in) + ADP + phosphate + H(+). Part of the high-affinity ATP-driven potassium transport (or Kdp) system, which catalyzes the hydrolysis of ATP coupled with the electrogenic transport of potassium into the cytoplasm. This subunit is responsible for energy coupling to the transport system and for the release of the potassium ions to the cytoplasm. This Escherichia fergusonii (strain ATCC 35469 / DSM 13698 / CCUG 18766 / IAM 14443 / JCM 21226 / LMG 7866 / NBRC 102419 / NCTC 12128 / CDC 0568-73) protein is Potassium-transporting ATPase ATP-binding subunit.